The following is a 78-amino-acid chain: Large ribosomal subunit protein eL20 (78 aa).

The protein belongs to the eukaryotic ribosomal protein eL20 family. In terms of assembly, part of the 50S ribosomal subunit. Binds 23S rRNA.

This is Large ribosomal subunit protein eL20 from Pyrobaculum arsenaticum (strain DSM 13514 / JCM 11321 / PZ6).